We begin with the raw amino-acid sequence, 411 residues long: AT-hook motif nuclear-localized protein 14 (411 aa).

Disordered regions lie at residues 1 to 32, 54 to 164, 289 to 348, and 366 to 411; these read MDPN…QRLT, ASTG…LGSV, KDAA…HQAG, and THSR…QIPD. The segment covering 7–19 has biased composition (basic residues); it reads HHHHQQQQLHHLH. The span at 20-29 shows a compositional bias: low complexity; sequence QQQQQQQQQQ. Positions 54 to 66 are enriched in polar residues; that stretch reads ASTGNAVPSSNNG. The Bipartite nuclear localization signal signature appears at 105–113; the sequence is KRKRGRPRK. The a.T hook DNA-binding region spans 105–117; that stretch reads KRKRGRPRKYVTP. Composition is skewed to low complexity over residues 120-135 and 144-159; these read ALAA…SSSA and VTGG…SKKS. In terms of domain architecture, PPC spans 165-305; it reads GKTGQCFTPH…GKGDASNSGS (141 aa). Residues 306–315 are compositionally biased toward polar residues; the sequence is RLTSPVSSGQ. The segment covering 374–390 has biased composition (gly residues); sequence RGGGNSGHDGRGGGGYD.

It localises to the nucleus. Functionally, transcription factor that specifically binds AT-rich DNA sequences related to the nuclear matrix attachment regions (MARs). The polypeptide is AT-hook motif nuclear-localized protein 14 (Arabidopsis thaliana (Mouse-ear cress)).